We begin with the raw amino-acid sequence, 1140 residues long: Calcium-activated potassium channel slo-1 (1140 aa).

At 1-44 (MGEIYSPSQSKGFNQPYGYPMNCNLSRVFMEMTEEDRKCLEERK) the chain is on the extracellular side. The helical transmembrane segment at 45–65 (YWCFLLSSITTFCASMILVVI) threads the bilayer. At 66–139 (WRVVTHLCCQ…LISGQSLTGR (74 aa)) the chain is on the cytoplasmic side. Residues 140–161 (FLVLLVFILSIGSLIIYFYDAS) form a helical membrane-spanning segment. Topologically, residues 162–178 (FQNFQVETCIPWQDSPS) are extracellular. Residues 179 to 199 (QQIDLGFNIFFLVYFFIRFIA) traverse the membrane as a helical segment. Residues 200–203 (ASDK) lie on the Cytoplasmic side of the membrane. A helical transmembrane segment spans residues 204-224 (VWFLLEMYSWIDFFTIPPSFV). Over 225 to 228 (AIYL) the chain is Extracellular. Residues 229–249 (QRNWLGFRFLRALRLMTVPDI) form a helical; Voltage-sensor membrane-spanning segment. The Cytoplasmic segment spans residues 250-264 (LQYLNILKTSSSIRL). The helical transmembrane segment at 265–285 (TQLVTIFVAVCLTGAGLVHLL) threads the bilayer. The Extracellular portion of the chain corresponds to 286 to 299 (ENSGDFFKGFINPH). Positions 300–322 (RITYADSVYFVLVTMSTVGYGDI) form an intramembrane region, pore-forming. The short motif at 316 to 319 (TVGY) is the Selectivity for potassium element. Topologically, residues 323–331 (YCTTLCGRL) are extracellular. Residues 332–352 (FMIFFILFGLAMFASYVPEIA) traverse the membrane as a helical segment. Topologically, residues 353–1140 (DLIGNRQKYG…LEYEPGKRHF (788 aa)) are cytoplasmic. The RCK N-terminal 1 domain maps to 371–514 (KKHIVVCGHI…DWKRGDDVIC (144 aa)). Residues 520–540 (LGFIAQSCLAPGFSTMMANLF) are segment S7. The segment at 578-598 (MTFPEAVDLLFNRLGLLLLAI) is segment S8. Residues 797 to 817 (VLNGHVVVCLFADQDSPLIGL) form a segment S9 region. In terms of domain architecture, RCK N-terminal 2 spans 799 to 953 (NGHVVVCLFA…GAKFGTNVPM (155 aa)). Positions 955 to 977 (TELVNDSNVQFLDQDDDDDPDTE) match the Calcium bowl motif. Positions 964, 967, 970, and 972 each coordinate Ca(2+). The segment S10 stretch occupies residues 984-1004 (FACGTAFAISVLDSLMSTTYF).

Belongs to the potassium channel family. Calcium-activated (TC 1.A.1.3) subfamily. Slo sub-subfamily. In terms of assembly, homotetramer; which constitutes the calcium-activated potassium channel. In terms of processing, phosphorylated. Expressed in synaptic regions of the nervous system including in both the nerve ring and nerve cords, as well as in the body-wall and vulval muscle. Expressed broadly in motor neurons. Forms puncta at presynaptic terminals of neurons, muscle excitation sites, and in the dorsal nerve cord.

Its subcellular location is the cell membrane. The protein resides in the synapse. Its function is as follows. Potassium channel activated by both membrane depolarization or increase in cytosolic Ca(2+) that mediates export of K(+). Its activation dampens the excitatory events that elevate the cytosolic Ca(2+) concentration and/or depolarize the cell membrane. It therefore contributes to repolarization of the membrane potential. Essential for the regulation of neurotransmitter release at synapses. Regulates longevity and age-associated decline in motor activity in mid-late life, by acting in motor neurons and through daf-16 in the intestine. When clustered in neurons, mediates ethanol-induced suppression of locomotory and egg-laying behaviors. The sequence is that of Calcium-activated potassium channel slo-1 from Caenorhabditis elegans.